The chain runs to 51 residues: Large ribosomal subunit protein eL39 (51 aa).

It belongs to the eukaryotic ribosomal protein eL39 family.

The polypeptide is Large ribosomal subunit protein eL39 (Saccharolobus islandicus (strain L.S.2.15 / Lassen #1) (Sulfolobus islandicus)).